The sequence spans 69 residues: Guanine nucleotide-binding protein subunit gamma (69 aa).

Ser2 carries the post-translational modification N-acetylserine. Cys66 is modified (cysteine methyl ester). A lipid anchor (S-geranylgeranyl cysteine) is attached at Cys66. The propeptide at 67–69 (SVL) is removed in mature form.

It belongs to the G protein gamma family. In terms of assembly, g proteins are composed of 3 units, alpha, beta and gamma. Interacts with gpbA, and this requires phlp1. In terms of processing, this protein is thought to be subject to lipidation, and this requires phlp1.

Its subcellular location is the cell membrane. Functionally, guanine nucleotide-binding proteins (G proteins) are involved as a modulator or transducer in various transmembrane signaling systems. This major G-protein of the squid photoreceptor is involved in visual transduction. The beta and gamma chains are required for the GTPase activity, for replacement of GDP by GTP, and for G protein-effector interaction. Required for normal chemotaxis in response to cAMP. The protein is Guanine nucleotide-binding protein subunit gamma (gpgA) of Dictyostelium discoideum (Social amoeba).